The chain runs to 225 residues: UPF0758 protein BPP1850 (225 aa).

In terms of domain architecture, MPN spans 103–225 (ALANPDLVRR…TVSMAAQGHL (123 aa)). The Zn(2+) site is built by His-174, His-176, and Asp-187. A JAMM motif motif is present at residues 174–187 (HNHPGGTAAASAAD).

This sequence belongs to the UPF0758 family.

This is UPF0758 protein BPP1850 from Bordetella parapertussis (strain 12822 / ATCC BAA-587 / NCTC 13253).